The following is a 213-amino-acid chain: MTELPERSAATTGGAKTARDVSSLIAELGLTAEDSIEPTALVPPERLREVALALRDRGFMLMDTVGVDYGAFPERIPARFCVLHNVYHIKDRCRLFLRVWLEEGQALDSLYPVWRAANYLEREVYDLFGIEFVGHPDLRKILTPDDLEGHPLRKDFPLGESPTLFREGRFIDPPAFRAGLSGQNAGLTGWRGEFRRGERGDRVPPVLPEGGPQ.

It belongs to the complex I 30 kDa subunit family. In terms of assembly, NDH-1 is composed of 15 different subunits. Subunits NuoB, C, D, E, F, and G constitute the peripheral sector of the complex.

It is found in the cell membrane. The catalysed reaction is a quinone + NADH + 5 H(+)(in) = a quinol + NAD(+) + 4 H(+)(out). Its function is as follows. NDH-1 shuttles electrons from NADH, via FMN and iron-sulfur (Fe-S) centers, to quinones in the respiratory chain. The immediate electron acceptor for the enzyme in this species is believed to be a menaquinone. Couples the redox reaction to proton translocation (for every two electrons transferred, four hydrogen ions are translocated across the cytoplasmic membrane), and thus conserves the redox energy in a proton gradient. In Deinococcus geothermalis (strain DSM 11300 / CIP 105573 / AG-3a), this protein is NADH-quinone oxidoreductase subunit C.